The following is a 254-amino-acid chain: MKYIDLNADIGESYGNFKVGEDEAILPLVSSINVACGFHAGDFMVMAECCKLAREYGVNLGAHPGYPDLWGFGRRSIPYTKEEITNMLLYQLGALSAFARAEGVKITHVKPHGALYNDAVVKVEVAEAVARAVWVFDAEIAIVTLPYGRLFEIASEMGLTVIREGFADRGYLPDGRLVPRNQEGAKKTGDEAVAQAIALAEGWVKAVDGTVIKAEVDTICVHGDNIEAVKLAQKINRELLNKNIYVQAWRKKRA.

The protein belongs to the LamB/PxpA family. Forms a complex composed of PxpA, PxpB and PxpC.

It carries out the reaction 5-oxo-L-proline + ATP + 2 H2O = L-glutamate + ADP + phosphate + H(+). Functionally, catalyzes the cleavage of 5-oxoproline to form L-glutamate coupled to the hydrolysis of ATP to ADP and inorganic phosphate. This Carboxydothermus hydrogenoformans (strain ATCC BAA-161 / DSM 6008 / Z-2901) protein is 5-oxoprolinase subunit A.